The chain runs to 186 residues: MGNLQQLALDADIAAVKQQEKLLRLPEFNEDIAWQLGSYIRQIAVQKNYPIAITVARFNQPLFYCAMPNSSPDNKNWLRRKAATVAHYYTSSYAVGLKLKKKGVTTLSGYGLDDKDYATHGGAFPITVEKAGIVGYIAVSGLDQRDDHALVVQALAVHLGLPAEKTALEYLTQDSLGKARLDETIV.

This sequence belongs to the UPF0303 family.

This chain is UPF0303 protein ZMO1353, found in Zymomonas mobilis subsp. mobilis (strain ATCC 31821 / ZM4 / CP4).